Consider the following 206-residue polypeptide: Urease accessory protein UreE (206 aa).

The interval 136-206 is disordered; the sequence is PEGGAYAEPS…HGHAHAHDRK (71 aa). 2 stretches are compositionally biased toward basic and acidic residues: residues 148 to 169 and 177 to 191; these read QGHDEHDHHHGHDHHHDHGGHE and HGHAHDDHVHDEHCG. Over residues 192 to 206 the composition is skewed to basic residues; sequence HGHHHHGHAHAHDRK.

This sequence belongs to the UreE family.

The protein resides in the cytoplasm. Functionally, involved in urease metallocenter assembly. Binds nickel. Probably functions as a nickel donor during metallocenter assembly. This is Urease accessory protein UreE from Bradyrhizobium sp. (strain BTAi1 / ATCC BAA-1182).